The chain runs to 1191 residues: MAPPVRPGMLPLLLLLLLPPLGSVPGVWSFSELFFMKEPQDATVTRKDPVVLDCQAHGEGPIKVTWLKNGAKLSENKRIQVLSNGSLYISEVEGRRGEQSDEGFYQCLAVNKYGAILSQKAHLTLSTISAFEVHPVSTEVHEGGVARFSCKISSTPPAVITWEFNRTALPTTMDRVTALPSGVLQIYDVGPEDAGNYRCVAATIAHKRKSMEASLTIVAANETRSFYMPTIIASPQNVTASLHQTVVLECMATGYPRPIISWSRLDHKSIDVFNTRVLGNGNLIISDVKLQHAGVYVCRATTPGTRNFTVAMATLTVLAPPSFVEWPESLTRPRAGTARFVCQAEGIPSPKMSWLKNGRRIHSNGRIKMYNSKLVINQIIPEDDAIYQCMAENSQGSVLSRARLTVVMSEDRPSAPYNVHAETMSSSAILLAWERPLYNSDKVIAYSVHYMKAEGLNNEEYQVVLGNDTTHYIIDDLEPDSNYTFYIVAYMPLGASQMSDHVTQNTLEDVPLRPPEISLTSRSPTDILVSWLPIPAKYRRGQVVLYRLSFRLSTENAIQVVELPGTVHEYLLEGLKPDSVYLVRITAATRVGLGESSVWTSHRTPKATSVKAPKSPELHLEPLNCTTISVRWLQDTEDPAAIRGYKLFYKEEGQQEHGPIFLDTGDLLYTLSGLDPRRKYHVRLLAYNNMEEGYQADQTVSTPGCVSVRDRMVPPPPPPHHLYAKANTSSSIFLHWRRPAFTTAQVINYTIRCNPVGLQNASLVLYLQTSETHMLVQGLEPNTKYEFAVRLHVDQLSSPWSPVVYHSTLPEAPTGPPVGVKVTLIEDDTALVSWKPPDGPETVVTRYTILYASRKAWIAGEWQVLHREGAITMALLENLVAGNVYIVKISASNEVGEGPFSNSVELAVLPKDASESNQRPKRLDSSNAKVYSGYYHLDQKSMTGIAVGVGIALTCILICVLILIYRSKARKSSASKTAQSGTQPLSQASASVAAGSDMGKNLERATETAESLVPMMPSSFIDAKGGTDLIINSYGPIIKNNTKKKWLFFQDTKKIKVEQTQRRFTQAVCFYQPGTTVLISDEDSPGSPGQTASFPRPFGATALDTEHSANSEGSHETGDSGRFSHESNDEIHLSSVISSTPPTSNPLAGGDSDGDAAPKKHGDPAQPLPAEQTSAPQTSAGLRYAAEGFPV.

The signal sequence occupies residues 1–23 (MAPPVRPGMLPLLLLLLLPPLGS). Ig-like domains lie at 24–124 (VPGV…AHLT), 126–216 (STIS…ASLT), 229–316 (PTII…ATLT), and 321–405 (PSFV…ARLT). At 24 to 943 (VPGVWSFSEL…YYHLDQKSMT (920 aa)) the chain is on the extracellular side. 2 cysteine pairs are disulfide-bonded: Cys54-Cys107 and Cys150-Cys199. A glycan (N-linked (GlcNAc...) asparagine) is linked at Asn237. Disulfide bonds link Cys250–Cys298 and Cys342–Cys389. Fibronectin type-III domains are found at residues 415 to 509 (APYN…TLED), 511 to 607 (PLRP…TPKA), 612 to 711 (APKS…VRDR), 718 to 811 (PPHH…TLPE), and 816 to 911 (PPVG…VLPK). Asn624 carries N-linked (GlcNAc...) asparagine glycosylation. A helical transmembrane segment spans residues 944 to 964 (GIAVGVGIALTCILICVLILI). Over 965–1191 (YRSKARKSSA…LRYAAEGFPV (227 aa)) the chain is Cytoplasmic. Disordered stretches follow at residues 975 to 1010 (SKTAQSGTQPLSQASASVAAGSDMGKNLERATETAE) and 1079 to 1191 (ISDE…GFPV). Residues 977–990 (TAQSGTQPLSQASA) show a composition bias toward polar residues. Residues 1104 to 1132 (DTEHSANSEGSHETGDSGRFSHESNDEIH) show a composition bias toward basic and acidic residues. Polar residues-rich tracts occupy residues 1135–1146 (SVISSTPPTSNP) and 1171–1180 (EQTSAPQTSA).

The protein belongs to the immunoglobulin superfamily. DCC family. As to expression, from mid-gastrulation to early somite stages, restricted to posterior neural plate and mesoderm with an anterior limit at the level of the rhombencephalon. Posterior restriction is progressively lost during somitogenesis. Expression is maintained in the neural tube and paraxial mesoderm during this process. As development proceeds, further restricted to the dorsal parts of the spinal cord and somites. In parallel, expression progresses caudally during axis elongation.

It is found in the membrane. In terms of biological role, may play a role in anteroposterior axis elongation. The chain is Protogenin from Mus musculus (Mouse).